Here is a 145-residue protein sequence, read N- to C-terminus: Large ribosomal subunit protein uL15 (145 aa).

The tract at residues 1–55 is disordered; it reads MSLLKTLAPKAGSKHAPKRIGRGIGSGMGGTATKGHKGQLARTGGTVRRGFEGGQ. The span at 12-21 shows a compositional bias: basic residues; that stretch reads GSKHAPKRIG. The segment covering 22 to 32 has biased composition (gly residues); it reads RGIGSGMGGTA.

Belongs to the universal ribosomal protein uL15 family. In terms of assembly, part of the 50S ribosomal subunit.

Functionally, binds to the 23S rRNA. The protein is Large ribosomal subunit protein uL15 of Bdellovibrio bacteriovorus (strain ATCC 15356 / DSM 50701 / NCIMB 9529 / HD100).